The sequence spans 426 residues: D-tagatose-1,6-bisphosphate aldolase subunit KbaZ (426 aa).

The protein belongs to the GatZ/KbaZ family. KbaZ subfamily. In terms of assembly, forms a complex with KbaY.

It functions in the pathway carbohydrate metabolism; D-tagatose 6-phosphate degradation; D-glyceraldehyde 3-phosphate and glycerone phosphate from D-tagatose 6-phosphate: step 2/2. Functionally, component of the tagatose-1,6-bisphosphate aldolase KbaYZ that is required for full activity and stability of the Y subunit. Could have a chaperone-like function for the proper and stable folding of KbaY. When expressed alone, KbaZ does not show any aldolase activity. This is D-tagatose-1,6-bisphosphate aldolase subunit KbaZ from Escherichia fergusonii (strain ATCC 35469 / DSM 13698 / CCUG 18766 / IAM 14443 / JCM 21226 / LMG 7866 / NBRC 102419 / NCTC 12128 / CDC 0568-73).